The chain runs to 424 residues: Phosphoribosylamine--glycine ligase (424 aa).

Residues 111–312 form the ATP-grasp domain; that stretch reads KAFVKECGIK…LLDLFLATAK (202 aa). ATP is bound at residue 137-189; that stretch reads IQNASFPLVIKALNKNTSIVHHQEEALKILEDALKQSNEPVIIEPFLEGFELS.

The protein belongs to the GARS family.

It catalyses the reaction 5-phospho-beta-D-ribosylamine + glycine + ATP = N(1)-(5-phospho-beta-D-ribosyl)glycinamide + ADP + phosphate + H(+). The protein operates within purine metabolism; IMP biosynthesis via de novo pathway; N(1)-(5-phospho-D-ribosyl)glycinamide from 5-phospho-alpha-D-ribose 1-diphosphate: step 2/2. This chain is Phosphoribosylamine--glycine ligase (purD), found in Helicobacter pylori (strain J99 / ATCC 700824) (Campylobacter pylori J99).